The sequence spans 227 residues: Phosphoribosylformylglycinamidine synthase subunit PurQ (227 aa).

One can recognise a Glutamine amidotransferase type-1 domain in the interval 3 to 225 (FAVIVFPGSN…LKQWRETYVV (223 aa)). Cysteine 86 (nucleophile) is an active-site residue. Catalysis depends on residues histidine 194 and glutamate 196.

In terms of assembly, part of the FGAM synthase complex composed of 1 PurL, 1 PurQ and 2 PurS subunits.

The protein localises to the cytoplasm. The catalysed reaction is N(2)-formyl-N(1)-(5-phospho-beta-D-ribosyl)glycinamide + L-glutamine + ATP + H2O = 2-formamido-N(1)-(5-O-phospho-beta-D-ribosyl)acetamidine + L-glutamate + ADP + phosphate + H(+). The enzyme catalyses L-glutamine + H2O = L-glutamate + NH4(+). It functions in the pathway purine metabolism; IMP biosynthesis via de novo pathway; 5-amino-1-(5-phospho-D-ribosyl)imidazole from N(2)-formyl-N(1)-(5-phospho-D-ribosyl)glycinamide: step 1/2. Functionally, part of the phosphoribosylformylglycinamidine synthase complex involved in the purines biosynthetic pathway. Catalyzes the ATP-dependent conversion of formylglycinamide ribonucleotide (FGAR) and glutamine to yield formylglycinamidine ribonucleotide (FGAM) and glutamate. The FGAM synthase complex is composed of three subunits. PurQ produces an ammonia molecule by converting glutamine to glutamate. PurL transfers the ammonia molecule to FGAR to form FGAM in an ATP-dependent manner. PurS interacts with PurQ and PurL and is thought to assist in the transfer of the ammonia molecule from PurQ to PurL. The protein is Phosphoribosylformylglycinamidine synthase subunit PurQ of Bacillus thuringiensis (strain Al Hakam).